A 296-amino-acid chain; its full sequence is tRNA pseudouridine synthase B (296 aa).

Asp38 acts as the Nucleophile in catalysis.

This sequence belongs to the pseudouridine synthase TruB family. Type 1 subfamily.

It catalyses the reaction uridine(55) in tRNA = pseudouridine(55) in tRNA. Its function is as follows. Responsible for synthesis of pseudouridine from uracil-55 in the psi GC loop of transfer RNAs. In Ehrlichia chaffeensis (strain ATCC CRL-10679 / Arkansas), this protein is tRNA pseudouridine synthase B.